The chain runs to 237 residues: Ribose-5-phosphate isomerase A (237 aa).

Residues S30–T33, D87–D90, and K100–G103 contribute to the substrate site. E109 serves as the catalytic Proton acceptor. A substrate-binding site is contributed by K127.

The protein belongs to the ribose 5-phosphate isomerase family. As to quaternary structure, homodimer.

It carries out the reaction aldehydo-D-ribose 5-phosphate = D-ribulose 5-phosphate. It participates in carbohydrate degradation; pentose phosphate pathway; D-ribose 5-phosphate from D-ribulose 5-phosphate (non-oxidative stage): step 1/1. In terms of biological role, catalyzes the reversible conversion of ribose-5-phosphate to ribulose 5-phosphate. The protein is Ribose-5-phosphate isomerase A of Prochlorococcus marinus (strain SARG / CCMP1375 / SS120).